The following is a 197-amino-acid chain: Inner membrane-spanning protein YciB (197 aa).

Helical transmembrane passes span 36–56, 64–84, 90–110, 135–155, and 162–182; these read IYSATAMLIISSLVVYGALFL, GQWLTLIACLVFGGLTLTFHS, WKAPVVNWLFALGFAGSHFIG, LAWIAFFLFCGAANLFVAFTF, and FKVFGSLGMTVIFLVAQGVYL.

This sequence belongs to the YciB family.

The protein localises to the cell inner membrane. In terms of biological role, plays a role in cell envelope biogenesis, maintenance of cell envelope integrity and membrane homeostasis. The polypeptide is Inner membrane-spanning protein YciB (Pseudomonas putida (strain GB-1)).